The chain runs to 605 residues: Elongation factor 4 (605 aa).

A tr-type G domain is found at 9–191 (DTIRNFCIIA…AIIKRVPAPV (183 aa)). GTP is bound by residues 21-26 (DHGKST) and 138-141 (NKID).

It belongs to the TRAFAC class translation factor GTPase superfamily. Classic translation factor GTPase family. LepA subfamily.

Its subcellular location is the cell inner membrane. It carries out the reaction GTP + H2O = GDP + phosphate + H(+). Required for accurate and efficient protein synthesis under certain stress conditions. May act as a fidelity factor of the translation reaction, by catalyzing a one-codon backward translocation of tRNAs on improperly translocated ribosomes. Back-translocation proceeds from a post-translocation (POST) complex to a pre-translocation (PRE) complex, thus giving elongation factor G a second chance to translocate the tRNAs correctly. Binds to ribosomes in a GTP-dependent manner. The polypeptide is Elongation factor 4 (Chlorobium phaeobacteroides (strain BS1)).